A 232-amino-acid chain; its full sequence is Glycerol-3-phosphate acyltransferase (232 aa).

6 helical membrane-spanning segments follow: residues 4–24 (FLAI…IIAG), 56–76 (AVTL…VAFF), 90–110 (IALN…TVFA), 124–144 (MLIG…ILAI), 147–167 (TRYV…IIAI), and 191–211 (SLDY…IYTH).

The protein belongs to the PlsY family. As to quaternary structure, probably interacts with PlsX.

It localises to the cell inner membrane. The enzyme catalyses an acyl phosphate + sn-glycerol 3-phosphate = a 1-acyl-sn-glycero-3-phosphate + phosphate. It participates in lipid metabolism; phospholipid metabolism. In terms of biological role, catalyzes the transfer of an acyl group from acyl-phosphate (acyl-PO(4)) to glycerol-3-phosphate (G3P) to form lysophosphatidic acid (LPA). This enzyme utilizes acyl-phosphate as fatty acyl donor, but not acyl-CoA or acyl-ACP. The chain is Glycerol-3-phosphate acyltransferase from Chlorobaculum parvum (strain DSM 263 / NCIMB 8327) (Chlorobium vibrioforme subsp. thiosulfatophilum).